The sequence spans 117 residues: Large ribosomal subunit protein uL18 (117 aa).

It belongs to the universal ribosomal protein uL18 family. As to quaternary structure, part of the 50S ribosomal subunit; part of the 5S rRNA/L5/L18/L25 subcomplex. Contacts the 5S and 23S rRNAs.

In terms of biological role, this is one of the proteins that bind and probably mediate the attachment of the 5S RNA into the large ribosomal subunit, where it forms part of the central protuberance. In Idiomarina loihiensis (strain ATCC BAA-735 / DSM 15497 / L2-TR), this protein is Large ribosomal subunit protein uL18.